We begin with the raw amino-acid sequence, 144 residues long: MNFKYIVAVSFLIASAYARSVKNDEQSLSQRDVLEEESLREIRGIGRKFLGGVKTTFRCGVKDFASKHLYGKRTAEEHEVMKRLEAIMRDLDSLDHPEEASERETRGFNQDEIANLFTKKEKRILGPVLGLVGNALGGLIKKIG.

The signal sequence occupies residues 1–18 (MNFKYIVAVSFLIASAYA). A propeptide spanning residues 19-43 (RSVKNDEQSLSQRDVLEEESLREIR) is cleaved from the precursor. At Y70 the chain carries Tyrosine amide. A propeptide spanning residues 74–123 (TAEEHEVMKRLEAIMRDLDSLDHPEEASERETRGFNQDEIANLFTKKEKR) is cleaved from the precursor. Isoleucine amide is present on I143.

It belongs to the bombinin family. As to expression, expressed by the skin glands.

Its subcellular location is the secreted. In terms of biological role, maximin-9 shows antimicrobial activity against bacteria and against the fungus C.albicans. It has little hemolytic activity. Functionally, maximin-H3 shows antibacterial activity against both Gram-positive and Gram-negative bacteria. It also shows antimicrobial activity against the fungus C.albicans. Shows strong hemolytic activity. This is Maximins 9/H3 from Bombina maxima (Giant fire-bellied toad).